Consider the following 236-residue polypeptide: F-box and leucine-rich protein 22 (236 aa).

Residues 1–46 (MHITQLNRECLLCLFSFLDKDSRRSLSRTCSQLRDVFEDPTLWPLL) enclose the F-box domain. LRR repeat units follow at residues 15–40 (FSFLDKDSRRSLSRTCSQLRDVFEDP), 43–72 (WPLLHFHSLAELKKDNFRLSPALRSLSICW), 98–123 (HESLVNDFLLQVCNRCPNLTSVTLSG), 124–149 (CGHVTDDCLARLLLSCPRLRTLRLEN), 150–175 (CARVTNRTLAAVAAHGRALQTLHVDF), and 176–201 (CRNVSAAGLLRLRAACPNLRLSAERS).

Directly interacts with SKP1 and CUL1. In terms of tissue distribution, enriched in cardiac muscle (at protein level).

It localises to the cytoplasm. It is found in the myofibril. The protein resides in the sarcomere. Its subcellular location is the z line. The protein operates within protein modification; protein ubiquitination. Its function is as follows. Substrate-recognition component of the SCF (SKP1-CUL1-F-box protein)-type E3 ubiquitin ligase complex. Promotes ubiquitination of sarcomeric proteins alpha-actinin-2 (ACTN2) and filamin-C (FLNC). The sequence is that of F-box and leucine-rich protein 22 (Fbxl22) from Mus musculus (Mouse).